Consider the following 260-residue polypeptide: Type III pantothenate kinase (260 aa).

D6–K13 serves as a coordination point for ATP. Residues Y100 and G107 to R110 contribute to the substrate site. D109 acts as the Proton acceptor in catalysis. Residue T133 participates in ATP binding. T186 is a binding site for substrate.

The protein belongs to the type III pantothenate kinase family. In terms of assembly, homodimer. The cofactor is NH4(+). K(+) is required as a cofactor.

The protein resides in the cytoplasm. It catalyses the reaction (R)-pantothenate + ATP = (R)-4'-phosphopantothenate + ADP + H(+). The protein operates within cofactor biosynthesis; coenzyme A biosynthesis; CoA from (R)-pantothenate: step 1/5. Functionally, catalyzes the phosphorylation of pantothenate (Pan), the first step in CoA biosynthesis. This Janthinobacterium sp. (strain Marseille) (Minibacterium massiliensis) protein is Type III pantothenate kinase.